Consider the following 725-residue polypeptide: ABC transporter G family member 19 (725 aa).

In terms of domain architecture, ABC transporter spans 73–325 (LNFNNLQYDV…FSDFGRPIPE (253 aa)). Residue 117–124 (GASGAGKS) coordinates ATP. The 211-residue stretch at 419–629 (FETFILAKRY…PYEAVLINEF (211 aa)) folds into the ABC transmembrane type-2 domain. 7 consecutive transmembrane segments (helical) span residues 438–458 (LVGTRIATVMVTGCLLATVYW), 473–493 (LFAFVVPTMFYCCLDNVPVFI), 515–535 (ISHSLVSLPQLLAPSLVFSAI), 537–557 (FWTVGLSGGLEGFVFYCLLIY), 577–597 (IMLCYMVSITYLAYCLLLSGF), 606–626 (FYWTWFHYISILKYPYEAVLI), and 698–718 (LWITFASGLFFRILFYFALLF).

Belongs to the ABC transporter superfamily. ABCG family. Eye pigment precursor importer (TC 3.A.1.204) subfamily.

It is found in the vacuole membrane. Its function is as follows. Confers selective resistance to kanamycin. This chain is ABC transporter G family member 19 (ABCG19), found in Arabidopsis thaliana (Mouse-ear cress).